Here is a 2922-residue protein sequence, read N- to C-terminus: Small ribosomal subunit protein uS4c (2922 aa).

An S4 RNA-binding domain is found at 111–174; sequence MRLDNIVFRL…ISMELVSRFL (64 aa).

It belongs to the universal ribosomal protein uS4 family. Part of the 30S ribosomal subunit. Contacts protein S5. The interaction surface between S4 and S5 is involved in control of translational fidelity.

It localises to the plastid. The protein resides in the chloroplast. One of the primary rRNA binding proteins, it binds directly to 16S rRNA where it nucleates assembly of the body of the 30S subunit. Functionally, with S5 and S12 plays an important role in translational accuracy. The protein is Small ribosomal subunit protein uS4c (rps4) of Stigeoclonium helveticum (Green alga).